Reading from the N-terminus, the 93-residue chain is Cobalt transport protein CbiN (93 aa).

2 helical membrane-spanning segments follow: residues 5–25 (LMLL…NHGG) and 63–83 (LLFT…LGYC).

The protein belongs to the CbiN family. In terms of assembly, forms an energy-coupling factor (ECF) transporter complex composed of an ATP-binding protein (A component, CbiO), a transmembrane protein (T component, CbiQ) and 2 possible substrate-capture proteins (S components, CbiM and CbiN) of unknown stoichimetry.

Its subcellular location is the cell inner membrane. Its pathway is cofactor biosynthesis; adenosylcobalamin biosynthesis. Its function is as follows. Part of the energy-coupling factor (ECF) transporter complex CbiMNOQ involved in cobalt import. The protein is Cobalt transport protein CbiN of Salmonella agona (strain SL483).